The following is a 145-amino-acid chain: Aspartate 1-decarboxylase (145 aa).

Catalysis depends on Ser26, which acts as the Schiff-base intermediate with substrate; via pyruvic acid. A Pyruvic acid (Ser) modification is found at Ser26. Position 58 (Thr58) interacts with substrate. Catalysis depends on Tyr59, which acts as the Proton donor. Gly74 to Ala76 contributes to the substrate binding site.

The protein belongs to the PanD family. As to quaternary structure, heterooctamer of four alpha and four beta subunits. The cofactor is pyruvate. Is synthesized initially as an inactive proenzyme, which is activated by self-cleavage at a specific serine bond to produce a beta-subunit with a hydroxyl group at its C-terminus and an alpha-subunit with a pyruvoyl group at its N-terminus.

It is found in the cytoplasm. It carries out the reaction L-aspartate + H(+) = beta-alanine + CO2. It functions in the pathway cofactor biosynthesis; (R)-pantothenate biosynthesis; beta-alanine from L-aspartate: step 1/1. In terms of biological role, catalyzes the pyruvoyl-dependent decarboxylation of aspartate to produce beta-alanine. This Synechocystis sp. (strain ATCC 27184 / PCC 6803 / Kazusa) protein is Aspartate 1-decarboxylase.